The primary structure comprises 79 residues: Small ribosomal subunit protein bS18 (79 aa).

The protein belongs to the bacterial ribosomal protein bS18 family. As to quaternary structure, part of the 30S ribosomal subunit. Forms a tight heterodimer with protein bS6.

Its function is as follows. Binds as a heterodimer with protein bS6 to the central domain of the 16S rRNA, where it helps stabilize the platform of the 30S subunit. The chain is Small ribosomal subunit protein bS18 from Streptococcus pyogenes serotype M49 (strain NZ131).